We begin with the raw amino-acid sequence, 251 residues long: Small ribosomal subunit protein uS2 (251 aa).

Serine 2 bears the N-acetylserine mark. Positions 213 to 251 (QVAEEATAAADEDVKEEVAEEQTEAADWAEGNTEEVASW) are disordered. The span at 222 to 236 (ADEDVKEEVAEEQTE) shows a compositional bias: acidic residues.

The protein belongs to the universal ribosomal protein uS2 family. In terms of assembly, component of the small ribosomal subunit. Mature ribosomes consist of a small (40S) and a large (60S) subunit. The 40S subunit contains about 33 different proteins and 1 molecule of RNA (18S). The 60S subunit contains about 49 different proteins and 3 molecules of RNA (25S, 5.8S and 5S). Interacts with RPS21.

It localises to the cytoplasm. Required for the assembly and/or stability of the 40S ribosomal subunit. Required for the processing of the 20S rRNA-precursor to mature 18S rRNA in a late step of the maturation of 40S ribosomal subunits. The protein is Small ribosomal subunit protein uS2 of Lachancea thermotolerans (strain ATCC 56472 / CBS 6340 / NRRL Y-8284) (Yeast).